Consider the following 342-residue polypeptide: GTPase Obg (342 aa).

One can recognise an Obg domain in the interval 1 to 159 (MQFIDQAKIE…KQLRLELKLL (159 aa)). In terms of domain architecture, OBG-type G spans 160 to 330 (AEVGIIGLPN…MLQEIWGILD (171 aa)). Residues 166–173 (GLPNAGKS), 191–195 (FTTLI), 213–216 (DIPG), 280–283 (NKID), and 311–313 (SAV) contribute to the GTP site. 2 residues coordinate Mg(2+): Ser-173 and Thr-193.

It belongs to the TRAFAC class OBG-HflX-like GTPase superfamily. OBG GTPase family. Monomer. Mg(2+) is required as a cofactor.

The protein localises to the cytoplasm. An essential GTPase which binds GTP, GDP and possibly (p)ppGpp with moderate affinity, with high nucleotide exchange rates and a fairly low GTP hydrolysis rate. Plays a role in control of the cell cycle, stress response, ribosome biogenesis and in those bacteria that undergo differentiation, in morphogenesis control. The sequence is that of GTPase Obg from Nostoc punctiforme (strain ATCC 29133 / PCC 73102).